The chain runs to 435 residues: Tol-Pal system protein TolB (435 aa).

The N-terminal stretch at 1–26 is a signal peptide; sequence MKTFSLLRILIVLVGMAGAFATPAMA.

The protein belongs to the TolB family. The Tol-Pal system is composed of five core proteins: the inner membrane proteins TolA, TolQ and TolR, the periplasmic protein TolB and the outer membrane protein Pal. They form a network linking the inner and outer membranes and the peptidoglycan layer.

It is found in the periplasm. Functionally, part of the Tol-Pal system, which plays a role in outer membrane invagination during cell division and is important for maintaining outer membrane integrity. This is Tol-Pal system protein TolB from Allorhizobium ampelinum (strain ATCC BAA-846 / DSM 112012 / S4) (Agrobacterium vitis (strain S4)).